Consider the following 106-residue polypeptide: uncharacterized protein (106 aa).

Disordered regions lie at residues 33–64 and 87–106; these read FKTS…SRND and NLTG…AVSK. A compositionally biased stretch (basic and acidic residues) spans 52 to 63; that stretch reads DGKKQESLESRN. Positions 87 to 99 are enriched in polar residues; sequence NLTGLESGGSSPP.

The protein resides in the mitochondrion. This is an uncharacterized protein from Arabidopsis thaliana (Mouse-ear cress).